A 283-amino-acid chain; its full sequence is Orotidine 5'-phosphate decarboxylase (283 aa).

The active-site Proton donor is lysine 97.

The protein belongs to the OMP decarboxylase family. Type 2 subfamily.

It catalyses the reaction orotidine 5'-phosphate + H(+) = UMP + CO2. It functions in the pathway pyrimidine metabolism; UMP biosynthesis via de novo pathway; UMP from orotate: step 2/2. This is Orotidine 5'-phosphate decarboxylase from Clostridium botulinum (strain Okra / Type B1).